Consider the following 509-residue polypeptide: Bifunctional purine biosynthesis protein PurH (509 aa).

Residues 1–144 (MKRALISVSD…KNYAAVTVVV (144 aa)) form the MGS-like domain.

This sequence belongs to the PurH family.

It catalyses the reaction (6R)-10-formyltetrahydrofolate + 5-amino-1-(5-phospho-beta-D-ribosyl)imidazole-4-carboxamide = 5-formamido-1-(5-phospho-D-ribosyl)imidazole-4-carboxamide + (6S)-5,6,7,8-tetrahydrofolate. The catalysed reaction is IMP + H2O = 5-formamido-1-(5-phospho-D-ribosyl)imidazole-4-carboxamide. Its pathway is purine metabolism; IMP biosynthesis via de novo pathway; 5-formamido-1-(5-phospho-D-ribosyl)imidazole-4-carboxamide from 5-amino-1-(5-phospho-D-ribosyl)imidazole-4-carboxamide (10-formyl THF route): step 1/1. The protein operates within purine metabolism; IMP biosynthesis via de novo pathway; IMP from 5-formamido-1-(5-phospho-D-ribosyl)imidazole-4-carboxamide: step 1/1. The protein is Bifunctional purine biosynthesis protein PurH of Listeria welshimeri serovar 6b (strain ATCC 35897 / DSM 20650 / CCUG 15529 / CIP 8149 / NCTC 11857 / SLCC 5334 / V8).